The sequence spans 433 residues: KH domain-containing, RNA-binding, signal transduction-associated protein 1 (433 aa).

Residues 1 to 79 (MQRRDDSSAR…PLLPGGAVKM (79 aa)) are disordered. Low complexity predominate over residues 41–76 (GAQHPQPLLTGGAAAGSSGAQGPAAANPAPLLPGGA). The segment at 82 to 243 (ENKYLPELMA…VKKFLVPDMM (162 aa)) is involved in homodimerization. A KH domain is found at 171–197 (QEETGAKISVLGKGSMRDKAKEEELRK). 3 disordered regions span residues 259-305 (GVPE…ALVR), 317-351 (AAVA…PPPP), and 403-433 (QDDW…YGRY). Over residues 277–300 (APPPPPPVPRGRGVGPPPPPPPPR) the composition is skewed to pro residues. Low complexity predominate over residues 329–342 (VRGAPAPRARAAGI). The span at 424 to 433 (AYREHPYGRY) shows a compositional bias: basic and acidic residues.

This sequence belongs to the KHDRBS family. In terms of assembly, self-associates to form homooligomers when bound to RNA, oligomerization appears to be limited when binding to proteins. Tyrosine phosphorylated by several non-receptor tyrosine kinases including LCK, FYN and JAK3. In terms of processing, acetylated. Positively correlates with ability to bind RNA. Post-translationally, methylated by HRMT1L2. Required for nuclear localization.

It is found in the nucleus. Its subcellular location is the cytoplasm. The protein resides in the membrane. Its function is as follows. Recruited and tyrosine phosphorylated by several receptor systems, for example the T-cell, leptin and insulin receptors. Once phosphorylated, functions as an adapter protein in signal transduction cascades by binding to SH2 and SH3 domain-containing proteins. Role in G2-M progression in the cell cycle. Represses CBP-dependent transcriptional activation apparently by competing with other nuclear factors for binding to CBP. Also acts as a putative regulator of mRNA stability and/or translation rates and mediates mRNA nuclear export. Plays a role in the regulation of alternative splicing and influences mRNA splice site selection and exon inclusion. The polypeptide is KH domain-containing, RNA-binding, signal transduction-associated protein 1 (Gallus gallus (Chicken)).